The primary structure comprises 737 residues: MRKALCLTESLSAIAENSTTLLNLNRRLTGLTRSGENRNALKLFADVHRCTTLRPDQYSVSLAITTARHLRDTIFGGQVHCYAIRSGLLCHSHVSNTLLSLYERLGNLASLKKKFDEIDEPDVYSWTTLLSASFKLGDIEYAFEVFDKMPERDDVAIWNAMITGCKESGYHETSVELFREMHKLGVRHDKFGFATILSMCDYGSLDFGKQVHSLVIKAGFFIASSVVNALITMYFNCQVVVDACLVFEETDVAVRDQVTFNVVIDGLAGFKRDESLLVFRKMLEASLRPTDLTFVSVMGSCSCAAMGHQVHGLAIKTGYEKYTLVSNATMTMYSSFEDFGAAHKVFESLEEKDLVTWNTMISSYNQAKLGKSAMSVYKRMHIIGVKPDEFTFGSLLATSLDLDVLEMVQACIIKFGLSSKIEISNALISAYSKNGQIEKADLLFERSLRKNLISWNAIISGFYHNGFPFEGLERFSCLLESEVRILPDAYTLSTLLSICVSTSSLMLGSQTHAYVLRHGQFKETLIGNALINMYSQCGTIQNSLEVFNQMSEKDVVSWNSLISAYSRHGEGENAVNTYKTMQDEGKVIPDAATFSAVLSACSHAGLVEEGLEIFNSMVEFHGVIRNVDHFSCLVDLLGRAGHLDEAESLVKISEKTIGSRVDVWWALFSACAAHGDLKLGKMVAKLLMEKEKDDPSVYVQLSNIYAGAGMWKEAEETRRAINMIGAMKQRGCSWMRL.

PPR repeat units follow at residues 20–55 (TLLNLNRRLTGLTRSGENRNALKLFADVHRCTTLRP), 56–90 (DQYSVSLAITTARHLRDTIFGGQVHCYAIRSGLLC), 91–121 (HSHVSNTLLSLYERLGNLASLKKKFDEIDEP), 122–152 (DVYSWTTLLSASFKLGDIEYAFEVFDKMPER), 154–188 (DVAIWNAMITGCKESGYHETSVELFREMHKLGVRH), 189–222 (DKFGFATILSMCDYGSLDFGKQVHSLVIKAGFFI), 223–253 (ASSVVNALITMYFNCQVVVDACLVFEETDVA), 256–289 (DQVTFNVVIDGLAGFKRDESLLVFRKMLEASLRP), 290–321 (TDLTFVSVMGSCSCAAMGHQVHGLAIKTGYEK), 322–352 (YTLVSNATMTMYSSFEDFGAAHKVFESLEEK), 353–387 (DLVTWNTMISSYNQAKLGKSAMSVYKRMHIIGVKP), 388–418 (DEFTFGSLLATSLDLDVLEMVQACIIKFGLS), 420–454 (KIEISNALISAYSKNGQIEKADLLFERSLRKNLIS), 455–485 (WNAIISGFYHNGFPFEGLERFSCLLESEVRI), 488–522 (DAYTLSTLLSICVSTSSLMLGSQTHAYVLRHGQFK), 523–553 (ETLIGNALINMYSQCGTIQNSLEVFNQMSEK), 554–588 (DVVSWNSLISAYSRHGEGENAVNTYKTMQDEGKVI), 590–620 (DAATFSAVLSACSHAGLVEEGLEIFNSMVEF), and 626–656 (NVDHFSCLVDLLGRAGHLDEAESLVKISEKT). Positions 663 to 737 (VWWALFSACA…KQRGCSWMRL (75 aa)) are type E motif; degenerate.

It belongs to the PPR family. PCMP-E subfamily.

The sequence is that of Pentatricopeptide repeat-containing protein At3g49740 (PCMP-E84) from Arabidopsis thaliana (Mouse-ear cress).